Reading from the N-terminus, the 522-residue chain is Apolipoprotein N-acyltransferase (522 aa).

Transmembrane regions (helical) follow at residues 17–37 (YFTY…FSPF), 61–81 (TALL…VSWL), 98–118 (FLVG…TYLV), 127–147 (VIFA…FTGF), 164–184 (IAPI…SAVI), and 197–217 (LKLV…SAYS). The CN hydrolase domain occupies 236-483 (AQGNIEQNLK…ETTLTYKIAP (248 aa)). The Proton acceptor role is filled by E276. K342 is a catalytic residue. C394 acts as the Nucleophile in catalysis. The helical transmembrane segment at 495 to 515 (NMPLYALSLLFLLLHSMMAFI) threads the bilayer.

The protein belongs to the CN hydrolase family. Apolipoprotein N-acyltransferase subfamily.

It localises to the cell inner membrane. It carries out the reaction N-terminal S-1,2-diacyl-sn-glyceryl-L-cysteinyl-[lipoprotein] + a glycerophospholipid = N-acyl-S-1,2-diacyl-sn-glyceryl-L-cysteinyl-[lipoprotein] + a 2-acyl-sn-glycero-3-phospholipid + H(+). The protein operates within protein modification; lipoprotein biosynthesis (N-acyl transfer). Its function is as follows. Catalyzes the phospholipid dependent N-acylation of the N-terminal cysteine of apolipoprotein, the last step in lipoprotein maturation. This Haemophilus influenzae (strain ATCC 51907 / DSM 11121 / KW20 / Rd) protein is Apolipoprotein N-acyltransferase.